We begin with the raw amino-acid sequence, 122 residues long: Large ribosomal subunit protein uL14c (122 aa).

Belongs to the universal ribosomal protein uL14 family. Part of the 50S ribosomal subunit.

The protein localises to the plastid. The protein resides in the chloroplast. Its function is as follows. Binds to 23S rRNA. This is Large ribosomal subunit protein uL14c from Welwitschia mirabilis (Tree tumbo).